We begin with the raw amino-acid sequence, 589 residues long: Serine/threonine-protein phosphatase 2A 65 kDa regulatory subunit A alpha isoform (589 aa).

At Ala2 the chain carries N-acetylalanine. HEAT repeat units follow at residues 8–46, 47–84, 85–123, 124–161, 162–200, 201–239, 240–278, 279–321, 322–360, 361–399, 400–438, 439–477, 478–516, 517–555, and 556–589; these read DSLY…GVER, TRSE…GGPE, YVHC…SPSD, LEAH…VSSA, VKAE…ELDN, VKSE…PQED, LEAL…GPEI, TKTD…RENV, IMTQ…GKDN, TIEH…GIRQ, LSQS…GVEF, FDEK…GKEW, AHAT…GQDI, TTKH…DNST, and LQSE…LSLA. Lys280 carries the N6-acetyllysine modification.

Belongs to the phosphatase 2A regulatory subunit A family. As to quaternary structure, PP2A consists of a common heterodimeric core enzyme, composed of PPP2CA a 36 kDa catalytic subunit (subunit C) and PPP2R1A a 65 kDa constant regulatory subunit (PR65 or subunit A), that associates with a variety of regulatory subunits. Proteins that associate with the core dimer include three families of regulatory subunits B (the R2/B/PR55/B55, R3/B''/PR72/PR130/PR59 and R5/B'/B56 families), the 48 kDa variable regulatory subunit, viral proteins, and cell signaling molecules. Found in a complex with at least ARL2, PPP2CB, PPP2R1A, PPP2R2A, PPP2R5E and TBCD. Interacts with the PP2A C catalytic subunit PPP2CA. Interacts with the PP2A B subunit PPP2R2A. Interacts with the PP2A B subunit PPP2R5D. Interacts with FOXO1; the interaction dephosphorylates FOXO1 on AKT-mediated phosphorylation sites. Interacts with IPO9. Interacts with TP53 and SGO1. Interacts with PLA2G16; this interaction might decrease PP2A activity. Interacts with CTTNBP2NL. Interacts with GNA12; the interaction promotes protein phosphatase 2A activation causing dephosphorylation of MAPT. Interacts with CIP2A; this interaction stabilizes CIP2A. Interacts with PABIR1/FAM122A. Interacts with ADCY8; antagonizes interaction between ADCY8 and calmodulin. Interacts with CRTC3 (when phosphorylated at 'Ser-391'). Interacts with SPRY2. Part of the core of STRIPAK complexes composed of PP2A catalytic and scaffolding subunits, the striatins (PP2A regulatory subunits), the striatin-associated proteins MOB4, STRIP1 and STRIP2, PDCD10 and members of the STE20 kinases, such as STK24 and STK26. Component of the Integrator-PP2A (INTAC) complex, composed of the Integrator core complex and protein phosphatase 2A subunits PPP2CA and PPP2R1A.

Its subcellular location is the cytoplasm. The protein localises to the nucleus. It localises to the chromosome. The protein resides in the centromere. It is found in the lateral cell membrane. Its subcellular location is the cell projection. The protein localises to the dendrite. Functionally, the PR65 subunit of protein phosphatase 2A serves as a scaffolding molecule to coordinate the assembly of the catalytic subunit and a variable regulatory B subunit. Upon interaction with GNA12 promotes dephosphorylation of microtubule associated protein TAU/MAPT. Required for proper chromosome segregation and for centromeric localization of SGO1 in mitosis. Together with RACK1 adapter, mediates dephosphorylation of AKT1 at 'Ser-473', preventing AKT1 activation and AKT-mTOR signaling pathway. Dephosphorylation of AKT1 is essential for regulatory T-cells (Treg) homeostasis and stability. Part of the striatin-interacting phosphatase and kinase (STRIPAK) complexes. STRIPAK complexes have critical roles in protein (de)phosphorylation and are regulators of multiple signaling pathways including Hippo, MAPK, nuclear receptor and cytoskeleton remodeling. Different types of STRIPAK complexes are involved in a variety of biological processes such as cell growth, differentiation, apoptosis, metabolism and immune regulation. Key mediator of a quality checkpoint during transcription elongation as part of the Integrator-PP2A (INTAC) complex. The INTAC complex drives premature transcription termination of transcripts that are unfavorably configured for transcriptional elongation: within the INTAC complex, acts as a scaffolding subunit for PPP2CA, which catalyzes dephosphorylation of the C-terminal domain (CTD) of Pol II subunit POLR2A/RPB1 and SUPT5H/SPT5, thereby preventing transcriptional elongation. Regulates the recruitment of the SKA complex to kinetochores. This Mus musculus (Mouse) protein is Serine/threonine-protein phosphatase 2A 65 kDa regulatory subunit A alpha isoform (Ppp2r1a).